The sequence spans 137 residues: Fluoride-specific ion channel FluC 2 (137 aa).

Transmembrane regions (helical) follow at residues 3–23, 44–64, 76–96, and 111–131; these read MGGS…SVLG, WGTM…GALA, PWLF…SFSL, and LGNV…GFLL. Positions 86 and 89 each coordinate Na(+).

This sequence belongs to the fluoride channel Fluc/FEX (TC 1.A.43) family.

It localises to the cell inner membrane. The catalysed reaction is fluoride(in) = fluoride(out). With respect to regulation, na(+) is not transported, but it plays an essential structural role and its presence is essential for fluoride channel function. In terms of biological role, fluoride-specific ion channel. Important for reducing fluoride concentration in the cell, thus reducing its toxicity. The sequence is that of Fluoride-specific ion channel FluC 2 from Bradyrhizobium diazoefficiens (strain JCM 10833 / BCRC 13528 / IAM 13628 / NBRC 14792 / USDA 110).